The chain runs to 430 residues: Sesquiterpene synthase 15 (430 aa).

3 residues coordinate Mg(2+): aspartate 182, aspartate 186, and glutamate 335. A DDXXD motif motif is present at residues 182–186 (DDIYD).

Belongs to the terpene synthase family. Tpsa subfamily. The cofactor is Mg(2+). Requires Mn(2+) as cofactor.

The protein operates within secondary metabolite biosynthesis; terpenoid biosynthesis. Its function is as follows. Sesquiterpene synthase involved in the biosynthesis of volatile compounds. No activity detected with geranyl diphosphate (GPP) and farnesyl diphosphate (FPP) as substrates. In Solanum lycopersicum (Tomato), this protein is Sesquiterpene synthase 15.